The chain runs to 118 residues: Late cornified envelope protein 5A (118 aa).

Over residues 1 to 10 (MSCQQSQQQC) the composition is skewed to low complexity. Disordered regions lie at residues 1 to 32 (MSCQ…PPKC) and 72 to 118 (HRPR…GGCC). Pro residues predominate over residues 11-32 (QPPPKCTPKCPPKCTPKCPPKC). A compositionally biased stretch (basic residues) spans 72–82 (HRPRQSLRRRP). Residues 97 to 118 (GGSSCCHSSGGSGCCHSSGGCC) show a composition bias toward low complexity.

Belongs to the LCE family. As to quaternary structure, interacts with CYSRT1; the interaction is direct. In terms of tissue distribution, skin-specific. Expression was readily detected in adult trunk skin, adult arm skin, fetal skin, penal skin, vulva, esophagus and tongue. Not expressed in the cervix, rectum, lung, colon, or placenta. Expression is observed in the heart.

Precursors of the cornified envelope of the stratum corneum. The sequence is that of Late cornified envelope protein 5A (LCE5A) from Homo sapiens (Human).